A 70-amino-acid chain; its full sequence is uncharacterized protein (70 aa).

The HTH cro/C1-type domain maps to 5–59; the sequence is IREFRAKYGMTQEELAKKVGVRRETIVFLEKGKYNPSLRLAYKIARVFNARIEDL. Positions 16-35 form a DNA-binding region, H-T-H motif; sequence QEELAKKVGVRRETIVFLEK.

This is an uncharacterized protein from Archaeoglobus fulgidus (strain ATCC 49558 / DSM 4304 / JCM 9628 / NBRC 100126 / VC-16).